We begin with the raw amino-acid sequence, 225 residues long: Small ribosomal subunit protein uS2 (225 aa).

It belongs to the universal ribosomal protein uS2 family.

The polypeptide is Small ribosomal subunit protein uS2 (Metallosphaera sedula (strain ATCC 51363 / DSM 5348 / JCM 9185 / NBRC 15509 / TH2)).